Reading from the N-terminus, the 178-residue chain is Cytochrome b6-f complex iron-sulfur subunit (178 aa).

A helical membrane pass occupies residues 20–42 (LLTFGTATGVALGALYPVANYFM). A Rieske domain is found at 65–161 (KTGWLATHQA…VDIEDDAVLV (97 aa)). [2Fe-2S] cluster is bound by residues C107, H109, C125, and H128. A disulfide bridge connects residues C112 and C127.

Belongs to the Rieske iron-sulfur protein family. As to quaternary structure, the 4 large subunits of the cytochrome b6-f complex are cytochrome b6, subunit IV (17 kDa polypeptide, PetD), cytochrome f and the Rieske protein, while the 4 small subunits are PetG, PetL, PetM and PetN. The complex functions as a dimer. [2Fe-2S] cluster serves as cofactor.

Its subcellular location is the cellular thylakoid membrane. It carries out the reaction 2 oxidized [plastocyanin] + a plastoquinol + 2 H(+)(in) = 2 reduced [plastocyanin] + a plastoquinone + 4 H(+)(out). In terms of biological role, component of the cytochrome b6-f complex, which mediates electron transfer between photosystem II (PSII) and photosystem I (PSI), cyclic electron flow around PSI, and state transitions. This chain is Cytochrome b6-f complex iron-sulfur subunit, found in Prochlorococcus marinus (strain MIT 9215).